We begin with the raw amino-acid sequence, 385 residues long: Selenoprotein P (385 aa).

The first 19 residues, 1 to 19 (MWRSLGLALALCLLPYGGA), serve as a signal peptide directing secretion. Sec-59 is a non-standard amino acid (selenocysteine). A cross-link (cysteinyl-selenocysteine (Sec-Cys); in isoform Se-P1) is located at residues 59 to 62 (UYLC). N-linked (GlcNAc...) asparagine glycosylation is found at Asn-83, Asn-174, and Asn-188. 2 disulfide bridges follow: Cys-168/Cys-186 and Cys-172/Cys-175. Residues 196–262 (KTTEPSEEHN…KGQHRQGHLE (67 aa)) are disordered. Positions 243 to 258 (LHHHHHHHKHKGQHRQ) are enriched in basic residues. Position 264 (Sec-264) is a non-standard amino acid, selenocysteine. The residue at position 269 (Ser-269) is a Phosphoserine. Residues Sec-282, Sec-323, Sec-335, and Sec-357 are each a non-standard amino acid (selenocysteine). Residues 357 to 385 (UHSQHVSPTEASPNUSUNNKTKKUKUNLN) are disordered. Positions 360–369 (QHVSPTEASP) are enriched in polar residues. O-linked (Hex...) threonine; partial glycosylation is present at Thr-365. 4 non-standard amino acids (selenocysteine) are found at residues Sec-371, Sec-373, Sec-380, and Sec-382. Residues 376 to 385 (KTKKUKUNLN) show a composition bias toward basic residues.

It belongs to the selenoprotein P family. Isoform Se-P1 contains several disulfide bridges and a selenide-sulfide bond between Sec-59 and Cys-62. These bonds are speculated to serve as redox-active pairs. Post-translationally, phosphorylation sites are present in the extracellular medium. As to expression, widely expressed, mainly by the liver. Secreted in plasma.

It is found in the secreted. Functionally, might be responsible for some of the extracellular antioxidant defense properties of selenium or might be involved in the transport of selenium. May supply selenium to tissues such as brain and testis. The polypeptide is Selenoprotein P (Rattus norvegicus (Rat)).